A 697-amino-acid polypeptide reads, in one-letter code: Hormonally up-regulated neu tumor-associated kinase homolog (697 aa).

Residues Tyr55–Leu313 enclose the Protein kinase domain. ATP contacts are provided by residues Leu61–Val69 and Lys84. Asp179 functions as the Proton acceptor in the catalytic mechanism. 2 stretches are compositionally biased toward basic and acidic residues: residues Lys405–Glu424 and Pro460–Ser473. Disordered stretches follow at residues Lys405–Phe480 and Asp586–Arg642. The span at Asp586–Phe600 shows a compositional bias: polar residues. Residues Ser607 to Ser626 show a composition bias toward low complexity. Residues Cys627–Ser637 show a composition bias toward polar residues.

Belongs to the protein kinase superfamily. CAMK Ser/Thr protein kinase family. SNF1 subfamily.

The catalysed reaction is L-seryl-[protein] + ATP = O-phospho-L-seryl-[protein] + ADP + H(+). It carries out the reaction L-threonyl-[protein] + ATP = O-phospho-L-threonyl-[protein] + ADP + H(+). The protein is Hormonally up-regulated neu tumor-associated kinase homolog (hunk) of Xenopus tropicalis (Western clawed frog).